Reading from the N-terminus, the 485-residue chain is Probable glycine dehydrogenase (decarboxylating) subunit 2 (485 aa).

Lys-269 carries the N6-(pyridoxal phosphate)lysine modification.

It belongs to the GcvP family. C-terminal subunit subfamily. As to quaternary structure, the glycine cleavage system is composed of four proteins: P, T, L and H. In this organism, the P 'protein' is a heterodimer of two subunits. Requires pyridoxal 5'-phosphate as cofactor.

It catalyses the reaction N(6)-[(R)-lipoyl]-L-lysyl-[glycine-cleavage complex H protein] + glycine + H(+) = N(6)-[(R)-S(8)-aminomethyldihydrolipoyl]-L-lysyl-[glycine-cleavage complex H protein] + CO2. Its function is as follows. The glycine cleavage system catalyzes the degradation of glycine. The P protein binds the alpha-amino group of glycine through its pyridoxal phosphate cofactor; CO(2) is released and the remaining methylamine moiety is then transferred to the lipoamide cofactor of the H protein. This is Probable glycine dehydrogenase (decarboxylating) subunit 2 from Chlorobium phaeovibrioides (strain DSM 265 / 1930) (Prosthecochloris vibrioformis (strain DSM 265)).